A 509-amino-acid chain; its full sequence is Cobyric acid synthase (509 aa).

The GATase cobBQ-type domain occupies 262-459 (EIKVGIIKLP…IHGIFENDSW (198 aa)). C343 (nucleophile) is an active-site residue. H451 is a catalytic residue.

Belongs to the CobB/CobQ family. CobQ subfamily.

Its pathway is cofactor biosynthesis; adenosylcobalamin biosynthesis. Its function is as follows. Catalyzes amidations at positions B, D, E, and G on adenosylcobyrinic A,C-diamide. NH(2) groups are provided by glutamine, and one molecule of ATP is hydrogenolyzed for each amidation. This Prochlorococcus marinus (strain MIT 9301) protein is Cobyric acid synthase.